Reading from the N-terminus, the 457-residue chain is Pup--protein ligase (457 aa).

Mg(2+) is bound at residue glutamate 9. Arginine 53 contributes to the ATP binding site. Position 55 (tyrosine 55) interacts with Mg(2+). Catalysis depends on aspartate 57, which acts as the Proton acceptor. Position 63 (glutamate 63) interacts with Mg(2+). Residues threonine 66 and tryptophan 424 each coordinate ATP.

It belongs to the Pup ligase/Pup deamidase family. Pup-conjugating enzyme subfamily.

It catalyses the reaction ATP + [prokaryotic ubiquitin-like protein]-L-glutamate + [protein]-L-lysine = ADP + phosphate + N(6)-([prokaryotic ubiquitin-like protein]-gamma-L-glutamyl)-[protein]-L-lysine.. It functions in the pathway protein degradation; proteasomal Pup-dependent pathway. The protein operates within protein modification; protein pupylation. In terms of biological role, catalyzes the covalent attachment of the prokaryotic ubiquitin-like protein modifier Pup to the proteasomal substrate proteins, thereby targeting them for proteasomal degradation. This tagging system is termed pupylation. The ligation reaction involves the side-chain carboxylate of the C-terminal glutamate of Pup and the side-chain amino group of a substrate lysine. This Xylanimonas cellulosilytica (strain DSM 15894 / JCM 12276 / CECT 5975 / KCTC 9989 / LMG 20990 / NBRC 107835 / XIL07) protein is Pup--protein ligase.